We begin with the raw amino-acid sequence, 122 residues long: MIQGFTRLNVADNSGAKEIMCIKVLGGSKRRYASVGDVIVASVKKALPTGKVKKGKVVKAVVVRTKKEIQRENGSLIRFDDNAAVIIDDKKEPIGTRIFGPVSRETRYAGFMKIVSLAPEVW.

This sequence belongs to the universal ribosomal protein uL14 family. Part of the 50S ribosomal subunit. Forms a cluster with proteins L3 and L19. In the 70S ribosome, L14 and L19 interact and together make contacts with the 16S rRNA in bridges B5 and B8.

Binds to 23S rRNA. Forms part of two intersubunit bridges in the 70S ribosome. The protein is Large ribosomal subunit protein uL14 of Sulfurovum sp. (strain NBC37-1).